Reading from the N-terminus, the 941-residue chain is Zinc finger protein su(Hw) (941 aa).

Disordered regions lie at residues 1–97 (MSAS…APAA) and 176–211 (ENNNGQEIVVTEDDEDLGEDGDEDGEDSSGKGNSSQ). Positions 47 to 57 (STTTTTSRTPS) are enriched in low complexity. Over residues 185-202 (VTEDDEDLGEDGDEDGED) the composition is skewed to acidic residues. A Phosphothreonine modification is found at threonine 186. The C2H2-type 1; atypical zinc-finger motif lies at 220 to 242 (HVCGKCYKTFRRVQSLKKHLEFC). The C2H2-type 2 zinc finger occupies 290–313 (INCPDCPKSFKTQTSYERHIFITH). The segment at 319–341 (FPCSICNANLRSEALLALHEEQH) adopts a C2H2-type 3; atypical zinc-finger fold. 9 consecutive C2H2-type zinc fingers follow at residues 348–366 (YACKICGKDFTRSYHLKRH), 380–402 (MSCKVCDRVFYRLDNLRSHLKQH), 413–435 (YMCHTCKNCFYSLSTLNIHIRTH), 441–463 (FDCDLCDKKFSALVALKKHRRYH), 469–491 (YSCTVCNQAFAVKEVLNRHMKRH), 497–519 (HKCDECGKSFIQATQLRTHSKTH), 523–545 (FPCEQCDEKFKTEKQLERHVKTH), 553–577 (FSCAECKRNFRTPALLKEHMDEGKH), and 596–619 (TDCAICDKNFDSSDTLRRHIRTVH). The interval 760–860 (ILTEEDIKLK…PIDDVIEYVL (101 aa)) is interaction with mod(mdg4). The tract at residues 864–941 (DQDEGGLDKD…KKPVGEQEKA (78 aa)) is disordered. Basic and acidic residues-rich tracts occupy residues 869–880 (GLDKDNESHSGD) and 891–941 (KTNE…QEKA).

As to quaternary structure, component of the gypsy chromatin insulator complex, composed of Cp190, mod(mdg4) and su(Hw). The gypsy chromatin insulator complex interacts with Topors via mod(mdg4) and su(Hw). Upon ecdysone stimulation, interacts with Nup98.

Its subcellular location is the nucleus. The protein resides in the chromosome. Its function is as follows. Component of the gypsy chromatin insulator complex which is required for the function of the gypsy chromatin insulator and other endogenous chromatin insulators. Chromatin insulators are regulatory elements which establish independent domains of transcriptional activity within eukaryotic genomes. Insulators have two defining properties; they can block the communication between an enhancer and a promoter when placed between them and can also buffer transgenes from position effect variegation (PEV). Insulators are proposed to structure the chromatin fiber into independent domains of differing transcriptional potential by promoting the formation of distinct chromatin loops. This chromatin looping may involve the formation of insulator bodies, where homotypic interactions between individual subunits of the insulator complex could promote the clustering of widely spaced insulators at the nuclear periphery. Within the gypsy insulator complex, this protein binds specifically to a region of the gypsy element located 3' of the 5' long terminal repeat (LTR), and may also mediate interaction with other endogenous insulators at sites distinct from those recognized by Cp190. Cooperates with pita and cliff to recruit Cp190 and regulate insulator function at the front-ultraabdominal (Fub) boundary. The polypeptide is Zinc finger protein su(Hw) (Drosophila melanogaster (Fruit fly)).